Consider the following 248-residue polypeptide: tRNA (guanine-N(7)-)-methyltransferase (248 aa).

4 residues coordinate S-adenosyl-L-methionine: Glu-80, Glu-105, Asp-132, and Asp-155. Asp-155 is an active-site residue. Substrate contacts are provided by residues Lys-159, Asp-191, and 223–226 (TKFE).

The protein belongs to the class I-like SAM-binding methyltransferase superfamily. TrmB family.

It carries out the reaction guanosine(46) in tRNA + S-adenosyl-L-methionine = N(7)-methylguanosine(46) in tRNA + S-adenosyl-L-homocysteine. Its pathway is tRNA modification; N(7)-methylguanine-tRNA biosynthesis. Its function is as follows. Catalyzes the formation of N(7)-methylguanine at position 46 (m7G46) in tRNA. This is tRNA (guanine-N(7)-)-methyltransferase from Nocardioides sp. (strain ATCC BAA-499 / JS614).